Here is a 193-residue protein sequence, read N- to C-terminus: MANLRTQKRLAASVLKCGKRKVWMDPNEISEISNANSRQNIRKLVKDGLVIRKPNLMHSRFRIRKTHAAKRLGRHTGYGKRKGTAEARMPSTVVWMRRQRVLRRLLRKYRESGKIDKHLYHTLYLEAKGNTFKHKRALIEHIQRAKAEANRTKLIQEQQDARRARAKAARQRRAKAVEEKREQIYTAAEKIEE.

The tract at residues 157 to 179 is disordered; sequence EQQDARRARAKAARQRRAKAVEE. The span at 164–174 shows a compositional bias: basic residues; the sequence is ARAKAARQRRA.

The protein belongs to the eukaryotic ribosomal protein eL19 family. As to quaternary structure, component of the large ribosomal subunit (LSU). Mature yeast ribosomes consist of a small (40S) and a large (60S) subunit. The 40S small subunit contains 1 molecule of ribosomal RNA (18S rRNA) and at least 33 different proteins. The large 60S subunit contains 3 rRNA molecules (25S, 5.8S and 5S rRNA) and at least 46 different proteins. eL19 lies in close proximity to the binding site for eukaryotic initiation factor eIF4G.

It is found in the cytoplasm. Component of the ribosome, a large ribonucleoprotein complex responsible for the synthesis of proteins in the cell. The small ribosomal subunit (SSU) binds messenger RNAs (mRNAs) and translates the encoded message by selecting cognate aminoacyl-transfer RNA (tRNA) molecules. The large subunit (LSU) contains the ribosomal catalytic site termed the peptidyl transferase center (PTC), which catalyzes the formation of peptide bonds, thereby polymerizing the amino acids delivered by tRNAs into a polypeptide chain. The nascent polypeptides leave the ribosome through a tunnel in the LSU and interact with protein factors that function in enzymatic processing, targeting, and the membrane insertion of nascent chains at the exit of the ribosomal tunnel. eL19 may play a role in the last stages of translation initiation, in particular subunit joining and shedding/releasing factors. The sequence is that of Large ribosomal subunit protein eL19B (rpl1902) from Schizosaccharomyces pombe (strain 972 / ATCC 24843) (Fission yeast).